A 148-amino-acid polypeptide reads, in one-letter code: SsrA-binding protein (148 aa).

The segment at 119–148 (AKGKKQHDKRQSMKEADWKREKQRLIKHTR) is disordered. The span at 127 to 142 (KRQSMKEADWKREKQR) shows a compositional bias: basic and acidic residues.

This sequence belongs to the SmpB family.

Its subcellular location is the cytoplasm. Functionally, required for rescue of stalled ribosomes mediated by trans-translation. Binds to transfer-messenger RNA (tmRNA), required for stable association of tmRNA with ribosomes. tmRNA and SmpB together mimic tRNA shape, replacing the anticodon stem-loop with SmpB. tmRNA is encoded by the ssrA gene; the 2 termini fold to resemble tRNA(Ala) and it encodes a 'tag peptide', a short internal open reading frame. During trans-translation Ala-aminoacylated tmRNA acts like a tRNA, entering the A-site of stalled ribosomes, displacing the stalled mRNA. The ribosome then switches to translate the ORF on the tmRNA; the nascent peptide is terminated with the 'tag peptide' encoded by the tmRNA and targeted for degradation. The ribosome is freed to recommence translation, which seems to be the essential function of trans-translation. The sequence is that of SsrA-binding protein from Neisseria meningitidis serogroup C (strain 053442).